An 846-amino-acid polypeptide reads, in one-letter code: Vinculin (846 aa).

Residues 1–257 (MPVKFHTKTL…VLQLTTTFEE (257 aa)) form an interaction with TLN region. Residues 315 to 370 (RAKLLAAADELDQILKELEELQAKGLGDSRQARALAHAAAVKLQELEQEIRKALAE) adopt a coiled-coil conformation. A disordered region spans residues 617–646 (WVPPRPPLPELEEEEEPPELPPPPEDPASL).

Belongs to the vinculin/alpha-catenin family. As to quaternary structure, monomer. Interacts with TLN (talin); the interaction facilitates VIN1 binding to F-actin. As to expression, expressed in epithelial tissues, specifically the pinacoderm (outer epithelium) and choanoderm (feeding epithelium) (at protein level). Also detected in migratory cells of the mesohyl (at protein level).

It is found in the cytoplasm. The protein localises to the cell cortex. Its subcellular location is the cell projection. It localises to the filopodium. The protein resides in the cytoskeleton. Functionally, actin filament (F-actin)-binding protein which may play a role in cell-cell adhesion. In Oscarella pearsei (Sponge), this protein is Vinculin.